The chain runs to 1168 residues: DNA-directed RNA polymerase subunit beta (1168 aa).

It belongs to the RNA polymerase beta chain family. In terms of assembly, the RNAP catalytic core consists of 2 alpha, 1 beta, 1 beta' and 1 omega subunit. When a sigma factor is associated with the core the holoenzyme is formed, which can initiate transcription.

It catalyses the reaction RNA(n) + a ribonucleoside 5'-triphosphate = RNA(n+1) + diphosphate. Functionally, DNA-dependent RNA polymerase catalyzes the transcription of DNA into RNA using the four ribonucleoside triphosphates as substrates. This chain is DNA-directed RNA polymerase subunit beta, found in Rhodococcus jostii (strain RHA1).